The primary structure comprises 357 residues: UPF0324 membrane protein BMEI1914 (357 aa).

A run of 11 helical transmembrane segments spans residues 29–48 (NILP…MVLE), 58–77 (AWLE…RSLA), 90–112 (SAKL…SAVI), 117–136 (GLIF…SYGI), 149–171 (LVAC…VIGA), 181–203 (AFTA…LLGL), 210–232 (ILAG…VSLL), 242–261 (LVRV…ISGN), 268–290 (PGFF…LHSL), 300–322 (AIQY…GVDI), and 334–356 (LTAI…MLGV).

It belongs to the UPF0324 family.

The protein localises to the cell membrane. In Brucella melitensis biotype 1 (strain ATCC 23456 / CCUG 17765 / NCTC 10094 / 16M), this protein is UPF0324 membrane protein BMEI1914.